The sequence spans 333 residues: Autoinducer 2 import system permease protein LsrC (333 aa).

9 helical membrane-spanning segments follow: residues 14 to 34 (LIAI…YFSL), 39 to 59 (LVFS…LVML), 70 to 90 (IAGL…SLSV), 93 to 113 (LLTL…VTWL), 115 to 135 (IPAI…MLLL), 157 to 177 (LNIS…AWIL), 206 to 226 (IQII…IVFA), 252 to 272 (GISL…AFFL), and 284 to 304 (LPAW…LIFD).

It belongs to the binding-protein-dependent transport system permease family. AraH/RbsC subfamily. In terms of assembly, the complex is composed of two ATP-binding proteins (LsrA), two transmembrane proteins (LsrC and LsrD) and a solute-binding protein (LsrB).

Its subcellular location is the cell inner membrane. Its function is as follows. Part of the ABC transporter complex LsrABCD involved in autoinducer 2 (AI-2) import. Probably responsible for the translocation of the substrate across the membrane. This Photorhabdus laumondii subsp. laumondii (strain DSM 15139 / CIP 105565 / TT01) (Photorhabdus luminescens subsp. laumondii) protein is Autoinducer 2 import system permease protein LsrC (lsrC).